A 175-amino-acid chain; its full sequence is Bcl-2-related protein A1 (175 aa).

This sequence belongs to the Bcl-2 family. As to quaternary structure, interacts directly with BCL2L11/BIM, BAK1, BID, BMF and BBC3. Interacts directly with PMAIP1. Interacts with BOP. Interacts with ING4. Interacts with UBQLN4.

The protein resides in the cytoplasm. Functionally, retards apoptosis induced by IL-3 deprivation. May function in the response of hemopoietic cells to external signals and in maintaining endothelial survival during infection. Can inhibit apoptosis induced by serum starvation in the mammary epithelial cell line HC11. This Bos taurus (Bovine) protein is Bcl-2-related protein A1 (BCL2A1).